We begin with the raw amino-acid sequence, 235 residues long: MAFVLPAKGILQSEALKQYIYETSAYPGEHEQLKELREATTKKYGSLSGMSVPVDEGRFLSMLLKLMNAKRTLEVGVFTGYSLLSTALALPEDGQVTAIDKDRGAYEIGLPFIQKAGVEDKINFIQSEAPPILNEMLCNDKQPEFDFAFVDADKSSYKHYHEQLLKLVKIGGIIAYDNTLWYGLVAKEVDDEVPEPLRMVRTVIMEFNKLLSSDLRVEISQISIGDGVTLCRRLC.

Lys-8 provides a ligand contact to substrate. Residues Val-52, Glu-74, 76–77, Ser-82, Asp-100, and Ala-129 each bind S-adenosyl-L-methionine; that span reads GV. A substrate-binding site is contributed by Asp-151. A divalent metal cation is bound at residue Asp-151. An S-adenosyl-L-methionine-binding site is contributed by Asp-153. A divalent metal cation is bound by residues Asp-177 and Asn-178.

The protein belongs to the class I-like SAM-binding methyltransferase superfamily. Cation-dependent O-methyltransferase family. CCoAMT subfamily. A divalent metal cation is required as a cofactor.

It carries out the reaction (E)-caffeoyl-CoA + S-adenosyl-L-methionine = (E)-feruloyl-CoA + S-adenosyl-L-homocysteine + H(+). Its pathway is aromatic compound metabolism; phenylpropanoid biosynthesis. In terms of biological role, methylates caffeoyl-CoA to feruloyl-CoA and 5-hydroxyferuloyl-CoA to sinapoyl-CoA. Plays a role in the synthesis of feruloylated polysaccharides. Involved in the reinforcement of the plant cell wall. Also involved in the responding to wounding or pathogen challenge by the increased formation of cell wall-bound ferulic acid polymers. The sequence is that of Caffeoyl-CoA O-methyltransferase from Populus kitakamiensis (Aspen).